The following is a 458-amino-acid chain: MEQLTPRETVRELDRYIVGQNQAKRAVAIALRNRYRRSLLPEGMQEEVLPKNILMIGPTGVGKTEIARRLAKLVRAPFLKVEATKFTEVGYVGRDVESIVRDLVEISLRMVKAEKMEEVEIQAAQAAEKRLEALLVPGKRQENNSSNPFQFLFNQGQEKEETVTPEIERDRTFIRERLHRGELDEQVIEVEVEDNQPLLPDFLGTGMEINTNLQDMMAGMLPKKRHKRKVTVREARRILTTEEAQKLIDHDEAVQEAIRRVEQEGMVFLDEIDKIAGRDGASGPDVSRGGVQRDILPIVEGSTINTKYGPVKTDHILFIAAGAFHVAKPSDLIPELQGRFPIRVELESLSIEDFQRILTEPQSSLIKQYSALLETEGIKVEFTENAIDELAKVAYEVNSNTENIGARRLHTIVERVLEELSFEASELPEDYTVTINREYIQHRLGNIVRNQDLSRYIL.

Residues Val-18, Gly-60–Glu-65, Asp-270, Glu-335, and Arg-407 contribute to the ATP site.

Belongs to the ClpX chaperone family. HslU subfamily. A double ring-shaped homohexamer of HslV is capped on each side by a ring-shaped HslU homohexamer. The assembly of the HslU/HslV complex is dependent on binding of ATP.

The protein localises to the cytoplasm. ATPase subunit of a proteasome-like degradation complex; this subunit has chaperone activity. The binding of ATP and its subsequent hydrolysis by HslU are essential for unfolding of protein substrates subsequently hydrolyzed by HslV. HslU recognizes the N-terminal part of its protein substrates and unfolds these before they are guided to HslV for hydrolysis. The chain is ATP-dependent protease ATPase subunit HslU from Desulfitobacterium hafniense (strain DSM 10664 / DCB-2).